A 616-amino-acid chain; its full sequence is MPKYRSATTTHGRNMAGARALWRATGMTDSDFGKPIIAVVNSFTQFVPGHVHLRDLGKLVAEQIEASGGVAKEFNTIAVDDGIAMGHGGMLYSLPSRELIADSVEYMVNAHCADAMVCISNCDKITPGMLMASLRLNIPVIFVSGGPMEAGKTKLSDQIIKLDLVDAMIQGADPKVSDDQSNQVERSACPTCGSCSGMFTANSMNCLTEALGLSQPGNGSLLATHADRKQLFLNAGKRIVELTKRYYEQDDESALPRNIASKAAFENAMTLDIAMGGSTNTVLHLLAAAQEAEIDFTMSDIDKLSRKVPQLCKVAPSTQKYHMEDVHRAGGVLGILGELDRAGLLNRNVKNVLGLTLPQTLEQYDITVTQDEAVKKMFRAGPAGIRTTQAFSQDCRWDSLDDDRAAGCIRSLEYAYSKDGGLAVLYGNFAENGCIVKTAGVDDSILKFTGPAKVYESQDDAVEAILGGKVVEGDVVVIRYEGPKGGPGMQEMLYPTSFLKSMGLGKACALITDGRFSGGTSGLSIGHVSPEAASGGTIALIEDGDTIAIDIPNRSIQLQLNEAEIAARREAQEARGDKAWTPKNRQRQVSFALRAYASLATSADKGAVRDKSKLGG.

Asp81 serves as a coordination point for Mg(2+). Residue Cys122 participates in [2Fe-2S] cluster binding. Mg(2+)-binding residues include Asp123 and Lys124. N6-carboxylysine is present on Lys124. Cys195 serves as a coordination point for [2Fe-2S] cluster. Glu491 lines the Mg(2+) pocket. Ser517 serves as the catalytic Proton acceptor.

Belongs to the IlvD/Edd family. Homodimer. [2Fe-2S] cluster serves as cofactor. The cofactor is Mg(2+).

The enzyme catalyses (2R)-2,3-dihydroxy-3-methylbutanoate = 3-methyl-2-oxobutanoate + H2O. The catalysed reaction is (2R,3R)-2,3-dihydroxy-3-methylpentanoate = (S)-3-methyl-2-oxopentanoate + H2O. The protein operates within amino-acid biosynthesis; L-isoleucine biosynthesis; L-isoleucine from 2-oxobutanoate: step 3/4. It participates in amino-acid biosynthesis; L-valine biosynthesis; L-valine from pyruvate: step 3/4. Its function is as follows. Functions in the biosynthesis of branched-chain amino acids. Catalyzes the dehydration of (2R,3R)-2,3-dihydroxy-3-methylpentanoate (2,3-dihydroxy-3-methylvalerate) into 2-oxo-3-methylpentanoate (2-oxo-3-methylvalerate) and of (2R)-2,3-dihydroxy-3-methylbutanoate (2,3-dihydroxyisovalerate) into 2-oxo-3-methylbutanoate (2-oxoisovalerate), the penultimate precursor to L-isoleucine and L-valine, respectively. This Salmonella schwarzengrund (strain CVM19633) protein is Dihydroxy-acid dehydratase.